Consider the following 524-residue polypeptide: Probable pectinesterase/pectinesterase inhibitor 42 (524 aa).

A signal peptide spans 1–22 (MLVKVFSFFILMITMVVIGVSK). Positions 23–172 (EYCDDKHSCQ…ISKAKVALAL (150 aa)) are pectinesterase inhibitor 42. The pectinesterase 42 stretch occupies residues 215–510 (DVVVAKDGTG…FTVAKLLDGE (296 aa)). N265 and N281 each carry an N-linked (GlcNAc...) asparagine glycan. T290 is a binding site for substrate. The active-site Proton donor; for pectinesterase activity is the D343. Residues C357 and C377 are joined by a disulfide bond. D364 (nucleophile; for pectinesterase activity) is an active-site residue. N412 carries N-linked (GlcNAc...) asparagine glycosylation. The substrate site is built by R430 and W432.

In the N-terminal section; belongs to the PMEI family. It in the C-terminal section; belongs to the pectinesterase family. As to expression, expressed in siliques but not in flower buds.

Its subcellular location is the secreted. The protein localises to the cell wall. It catalyses the reaction [(1-&gt;4)-alpha-D-galacturonosyl methyl ester](n) + n H2O = [(1-&gt;4)-alpha-D-galacturonosyl](n) + n methanol + n H(+). It functions in the pathway glycan metabolism; pectin degradation; 2-dehydro-3-deoxy-D-gluconate from pectin: step 1/5. Acts in the modification of cell walls via demethylesterification of cell wall pectin. The chain is Probable pectinesterase/pectinesterase inhibitor 42 (PME42) from Arabidopsis thaliana (Mouse-ear cress).